Here is a 231-residue protein sequence, read N- to C-terminus: Cytochrome c oxidase subunit 2 (231 aa).

The Mitochondrial intermembrane segment spans residues 1 to 14 (MAHPVHVGLKEATS). The helical transmembrane segment at 15 to 45 (PFMEELIAFHDHTLMIIFLISSLVLYIISMM) threads the bilayer. Topologically, residues 46 to 59 (LTTKLTHTSTMNAQ) are mitochondrial matrix. The chain crosses the membrane as a helical span at residues 60 to 87 (EIEIIWTILPAIILIMIALPSLRILYMT). Over 88–231 (DEFNKPYLTL…WASYLYIVSL (144 aa)) the chain is Mitochondrial intermembrane. 6 residues coordinate Cu cation: H161, C196, E198, C200, H204, and M207. E198 provides a ligand contact to Mg(2+).

The protein belongs to the cytochrome c oxidase subunit 2 family. As to quaternary structure, component of the cytochrome c oxidase (complex IV, CIV), a multisubunit enzyme composed of 14 subunits. The complex is composed of a catalytic core of 3 subunits MT-CO1, MT-CO2 and MT-CO3, encoded in the mitochondrial DNA, and 11 supernumerary subunits COX4I, COX5A, COX5B, COX6A, COX6B, COX6C, COX7A, COX7B, COX7C, COX8 and NDUFA4, which are encoded in the nuclear genome. The complex exists as a monomer or a dimer and forms supercomplexes (SCs) in the inner mitochondrial membrane with NADH-ubiquinone oxidoreductase (complex I, CI) and ubiquinol-cytochrome c oxidoreductase (cytochrome b-c1 complex, complex III, CIII), resulting in different assemblies (supercomplex SCI(1)III(2)IV(1) and megacomplex MCI(2)III(2)IV(2)). Found in a complex with TMEM177, COA6, COX18, COX20, SCO1 and SCO2. Interacts with TMEM177 in a COX20-dependent manner. Interacts with COX20. Interacts with COX16. Cu cation serves as cofactor.

The protein localises to the mitochondrion inner membrane. The catalysed reaction is 4 Fe(II)-[cytochrome c] + O2 + 8 H(+)(in) = 4 Fe(III)-[cytochrome c] + 2 H2O + 4 H(+)(out). In terms of biological role, component of the cytochrome c oxidase, the last enzyme in the mitochondrial electron transport chain which drives oxidative phosphorylation. The respiratory chain contains 3 multisubunit complexes succinate dehydrogenase (complex II, CII), ubiquinol-cytochrome c oxidoreductase (cytochrome b-c1 complex, complex III, CIII) and cytochrome c oxidase (complex IV, CIV), that cooperate to transfer electrons derived from NADH and succinate to molecular oxygen, creating an electrochemical gradient over the inner membrane that drives transmembrane transport and the ATP synthase. Cytochrome c oxidase is the component of the respiratory chain that catalyzes the reduction of oxygen to water. Electrons originating from reduced cytochrome c in the intermembrane space (IMS) are transferred via the dinuclear copper A center (CU(A)) of subunit 2 and heme A of subunit 1 to the active site in subunit 1, a binuclear center (BNC) formed by heme A3 and copper B (CU(B)). The BNC reduces molecular oxygen to 2 water molecules using 4 electrons from cytochrome c in the IMS and 4 protons from the mitochondrial matrix. The protein is Cytochrome c oxidase subunit 2 (MT-CO2) of Brachyteles hypoxanthus (Northern muriqui).